Here is a 423-residue protein sequence, read N- to C-terminus: Histidine--tRNA ligase (423 aa).

Belongs to the class-II aminoacyl-tRNA synthetase family. As to quaternary structure, homodimer.

The protein resides in the cytoplasm. It carries out the reaction tRNA(His) + L-histidine + ATP = L-histidyl-tRNA(His) + AMP + diphosphate + H(+). This Mycobacterium bovis (strain ATCC BAA-935 / AF2122/97) protein is Histidine--tRNA ligase (hisS).